The sequence spans 463 residues: Retinoic acid receptor RXR-gamma (463 aa).

The interval 1–138 (MYGNYSHFMK…TSPGSLVKHI (138 aa)) is modulating. A disordered region spans residues 18–53 (SPGHTGSTSMSPSAALSTGKPMDSHPSYTDTPVSAP). Residues 21 to 33 (HTGSTSMSPSAAL) are compositionally biased toward polar residues. NR C4-type zinc fingers lie at residues 139 to 159 (CAIC…CEGC) and 175 to 194 (CRDN…CQYC). Residues 139 to 204 (CAICGDRSSG…RYQKCLVMGM (66 aa)) constitute a DNA-binding region (nuclear receptor). The segment at 205-230 (KREAVQEERQRSRERAESEAECASSG) is hinge. A compositionally biased stretch (basic and acidic residues) spans 211–222 (EERQRSRERAES). The interval 211–232 (EERQRSRERAESEAECASSGHE) is disordered. The NR LBD domain occupies 231–459 (HEDMPVERIL…TFLMEMLETP (229 aa)).

Belongs to the nuclear hormone receptor family. NR2 subfamily. Homodimer. Heterodimer with a RAR molecule. Binds DNA preferentially as a RAR/RXR heterodimer. Interacts with RARA. In terms of processing, acetylated by EP300.

The protein resides in the nucleus. Its subcellular location is the cytoplasm. In terms of biological role, receptor for retinoic acid. Retinoic acid receptors bind as heterodimers to their target response elements in response to their ligands, all-trans or 9-cis retinoic acid, and regulate gene expression in various biological processes. The RAR/RXR heterodimers bind to the retinoic acid response elements (RARE) composed of tandem 5'-AGGTCA-3' sites known as DR1-DR5. The high affinity ligand for RXRs is 9-cis retinoic acid. The polypeptide is Retinoic acid receptor RXR-gamma (RXRG) (Pongo abelii (Sumatran orangutan)).